We begin with the raw amino-acid sequence, 148 residues long: Large ribosomal subunit protein bL27m (148 aa).

Residues 1–30 (MALAVLAWRTRTAVIALLSPPQAAALAVRY) constitute a mitochondrion transit peptide.

This sequence belongs to the bacterial ribosomal protein bL27 family. Component of the mitochondrial ribosome large subunit (39S) which comprises a 16S rRNA and about 50 distinct proteins.

It is found in the mitochondrion. This is Large ribosomal subunit protein bL27m (MRPL27) from Bos taurus (Bovine).